A 247-amino-acid chain; its full sequence is ATP synthase subunit a, chloroplastic (247 aa).

5 helical membrane passes run 38-58 (QVLITSWVVIAILLGSTILVV), 95-115 (VPFIGTLFLFIFVSNWSGALL), 134-154 (INTTVALALLTSVAYFYAGIS), 199-219 (LVVVVLVSLVPLVVPIPVMFL), and 220-240 (GLFTSGIQALIFATLAAAYIG).

Belongs to the ATPase A chain family. In terms of assembly, F-type ATPases have 2 components, CF(1) - the catalytic core - and CF(0) - the membrane proton channel. CF(1) has five subunits: alpha(3), beta(3), gamma(1), delta(1), epsilon(1). CF(0) has four main subunits: a, b, b' and c.

Its subcellular location is the plastid. It localises to the chloroplast thylakoid membrane. Its function is as follows. Key component of the proton channel; it plays a direct role in the translocation of protons across the membrane. This is ATP synthase subunit a, chloroplastic from Lotus japonicus (Lotus corniculatus var. japonicus).